Consider the following 1154-residue polypeptide: PDZ domain-containing protein 8 (1154 aa).

The chain crosses the membrane as a helical span at residues 2-24; it reads GLLLMILASAVLGSFLTLLAQFF. The interval 66-90 is disordered; sequence DEEPSGAAPEGGATPTAAPETPAPP. Positions 70-85 are enriched in low complexity; the sequence is SGAAPEGGATPTAAPE. Residues 91 to 294 enclose the SMP-LTD domain; that stretch reads TRETCYFLNA…LPNYKIRFKP (204 aa). The PDZ domain maps to 366-449; that stretch reads TVELIKGNLQ…RVLVYYERPV (84 aa). 3 positions are modified to phosphoserine: serine 496, serine 521, and serine 538. Residues 548-612 are disordered; sequence GSHPLPPKIQ…SADAPNQAEP (65 aa). The Phorbol-ester/DAG-type zinc-finger motif lies at 840–891; sequence KHSFQDTQFQNPTWCDYCKKKVWTKAASQCMFCAYVCHKKCQEKCLAETSVC. A disordered region spans residues 955–999; the sequence is RLSEPGTDLVEPSPKHTPNTSDNEGSDTEVCGPNSPSKRGNSTGI. Phosphoserine is present on residues serine 967 and serine 980. Over residues 988-998 the composition is skewed to polar residues; that stretch reads NSPSKRGNSTG. Residues 1028–1063 are a coiled coil; it reads PTEERIQKLEFMLDKLQNEIDQELEHNNSLVREEKE. The span at 1132 to 1144 shows a compositional bias: polar residues; it reads SQLIDSQPFSSIS. The segment at 1132–1154 is disordered; it reads SQLIDSQPFSSISDDLFGPSESV.

As to quaternary structure, interacts with MSN. (Microbial infection) Interacts with HIV-1 Gag polyprotein p55.

It is found in the endoplasmic reticulum membrane. Molecular tethering protein that connects endoplasmic reticulum and mitochondria membranes. PDZD8-dependent endoplasmic reticulum-mitochondria membrane tethering is essential for endoplasmic reticulum-mitochondria Ca(2+) transfer. In neurons, involved in the regulation of dendritic Ca(2+) dynamics by regulating mitochondrial Ca(2+) uptake in neurons. Plays an indirect role in the regulation of cell morphology and cytoskeletal organization. May inhibit herpes simplex virus 1 infection at an early stage. In Homo sapiens (Human), this protein is PDZ domain-containing protein 8.